Here is a 440-residue protein sequence, read N- to C-terminus: Glutamyl-tRNA(Gln) amidotransferase subunit D (440 aa).

The region spanning 94 to 424 is the Asparaginase/glutaminase domain; the sequence is PSVTILGTGG…KEVRRMMLTN (331 aa). Residues T104, T180, D181, and K258 contribute to the active site.

This sequence belongs to the asparaginase 1 family. GatD subfamily. As to quaternary structure, heterodimer of GatD and GatE.

It catalyses the reaction L-glutamyl-tRNA(Gln) + L-glutamine + ATP + H2O = L-glutaminyl-tRNA(Gln) + L-glutamate + ADP + phosphate + H(+). Its function is as follows. Allows the formation of correctly charged Gln-tRNA(Gln) through the transamidation of misacylated Glu-tRNA(Gln) in organisms which lack glutaminyl-tRNA synthetase. The reaction takes place in the presence of glutamine and ATP through an activated gamma-phospho-Glu-tRNA(Gln). The GatDE system is specific for glutamate and does not act on aspartate. This is Glutamyl-tRNA(Gln) amidotransferase subunit D from Thermococcus kodakarensis (strain ATCC BAA-918 / JCM 12380 / KOD1) (Pyrococcus kodakaraensis (strain KOD1)).